Here is a 432-residue protein sequence, read N- to C-terminus: Adenylosuccinate synthetase (432 aa).

Residues 12 to 18 (GDEGKGK) and 40 to 42 (GHT) contribute to the GTP site. Aspartate 13 (proton acceptor) is an active-site residue. Mg(2+)-binding residues include aspartate 13 and glycine 40. Residues 13-16 (DEGK), 38-41 (NAGH), threonine 132, arginine 146, glutamine 226, threonine 241, and arginine 305 contribute to the IMP site. Histidine 41 functions as the Proton donor in the catalytic mechanism. 301 to 307 (TVTGRKR) contacts substrate. GTP-binding positions include arginine 307, 333–335 (KLD), and 415–417 (STS).

The protein belongs to the adenylosuccinate synthetase family. In terms of assembly, homodimer. Requires Mg(2+) as cofactor.

It is found in the cytoplasm. It catalyses the reaction IMP + L-aspartate + GTP = N(6)-(1,2-dicarboxyethyl)-AMP + GDP + phosphate + 2 H(+). The protein operates within purine metabolism; AMP biosynthesis via de novo pathway; AMP from IMP: step 1/2. Its function is as follows. Plays an important role in the de novo pathway of purine nucleotide biosynthesis. Catalyzes the first committed step in the biosynthesis of AMP from IMP. The protein is Adenylosuccinate synthetase of Rhizobium etli (strain ATCC 51251 / DSM 11541 / JCM 21823 / NBRC 15573 / CFN 42).